The sequence spans 309 residues: Probable manganese-dependent inorganic pyrophosphatase (309 aa).

Positions 9, 13, 15, 75, 97, and 149 each coordinate Mn(2+).

This sequence belongs to the PPase class C family. Mn(2+) is required as a cofactor.

The protein resides in the cytoplasm. It catalyses the reaction diphosphate + H2O = 2 phosphate + H(+). The protein is Probable manganese-dependent inorganic pyrophosphatase of Lactiplantibacillus plantarum (strain ATCC BAA-793 / NCIMB 8826 / WCFS1) (Lactobacillus plantarum).